The primary structure comprises 371 residues: Chaperone protein DnaJ (371 aa).

The region spanning 5-69 (DYYEVLGLSK…QKRAQYDQFG (65 aa)) is the J domain. The CR-type zinc-finger motif lies at 133–215 (GKELNVEIPV…CHGSGKVRKR (83 aa)). Zn(2+)-binding residues include C146, C149, C163, C166, C189, C192, C203, and C206. CXXCXGXG motif repeat units follow at residues 146 to 153 (CDTCKGSG), 163 to 170 (CKHCSGSG), 189 to 196 (CSHCSGTG), and 203 to 210 (CTTCHGSG).

Belongs to the DnaJ family. As to quaternary structure, homodimer. Zn(2+) is required as a cofactor.

The protein resides in the cytoplasm. Functionally, participates actively in the response to hyperosmotic and heat shock by preventing the aggregation of stress-denatured proteins and by disaggregating proteins, also in an autonomous, DnaK-independent fashion. Unfolded proteins bind initially to DnaJ; upon interaction with the DnaJ-bound protein, DnaK hydrolyzes its bound ATP, resulting in the formation of a stable complex. GrpE releases ADP from DnaK; ATP binding to DnaK triggers the release of the substrate protein, thus completing the reaction cycle. Several rounds of ATP-dependent interactions between DnaJ, DnaK and GrpE are required for fully efficient folding. Also involved, together with DnaK and GrpE, in the DNA replication of plasmids through activation of initiation proteins. This is Chaperone protein DnaJ from Bacillus cereus (strain AH820).